The primary structure comprises 352 residues: C-C chemokine receptor type 5 (352 aa).

Residues 1 to 30 (MDYQVSSPTYDIDYYTSEPCQKINVKQIAA) lie on the Extracellular side of the membrane. Tyr-3 bears the Sulfotyrosine mark. O-linked (GalNAc...) serine glycosylation is found at Ser-6 and Ser-7. A sulfotyrosine mark is found at Tyr-10, Tyr-14, and Tyr-15. 2 cysteine pairs are disulfide-bonded: Cys-20/Cys-269 and Cys-101/Cys-178. Residues 31 to 58 (RLLPPLYSLVFIFGFVGNILVVLILINC) traverse the membrane as a helical segment. At 59–68 (KRLKSMTDIY) the chain is on the cytoplasmic side. Residues 69–89 (LLNLAISDLLFLLTVPFWAHY) form a helical membrane-spanning segment. Residues 90 to 102 (AAAQWNFGNTMCQ) are Extracellular-facing. Residues 103 to 124 (LLTGLYFIGFFSGIFFIILLTI) traverse the membrane as a helical segment. Over 125-141 (DRYLAIVHAVFALKART) the chain is Cytoplasmic. The helical transmembrane segment at 142–166 (VTFGVVTSVITWVVAVFASLPGIIF) threads the bilayer. Residues 167-198 (TRYQREGLHYTCSSHFPYSQYQFWKNFQTLKI) lie on the Extracellular side of the membrane. A helical membrane pass occupies residues 199–218 (VILGLVLPLLVMVICYSGIL). Topologically, residues 219–235 (KTLLRCRNEKKRHRAVR) are cytoplasmic. Residues 236–260 (LIFTIMIVYFLFWAPYNIVLLLNTF) form a helical membrane-spanning segment. Topologically, residues 261-277 (QEFFGLNNCSSSNRLDQ) are extracellular. Residues 278–301 (AMQVTETLGMTHCCINPIIYAFVG) form a helical membrane-spanning segment. Topologically, residues 302–352 (EKFRNYLLVFFQKHIAKRFCKCCSIFQQEAPERASSVYTRSTGEQETSVGL) are cytoplasmic. S-palmitoyl cysteine attachment occurs at residues Cys-321, Cys-323, and Cys-324. Ser-336, Ser-337, Ser-342, and Ser-349 each carry phosphoserine; by BARK1.

The protein belongs to the G-protein coupled receptor 1 family. As to quaternary structure, interacts with PRAF2. Efficient ligand binding to CCL3/MIP-1alpha and CCL4/MIP-1beta requires sulfation, O-glycosylation and sialic acid modifications. Glycosylation on Ser-6 is required for efficient binding of CCL4. Interacts with GRK2. Interacts with ARRB1 and ARRB2. Interacts with CNIH4. Interacts with S100A4; this interaction stimulates T-lymphocyte chemotaxis. Post-translationally, sulfated on at least 2 of the N-terminal tyrosines. Sulfation is required for efficient binding of the chemokines, CCL3 and CCL4. Palmitoylation in the C-terminal is important for cell surface expression. In terms of processing, phosphorylation on serine residues in the C-terminal is stimulated by binding CC chemokines especially by APO-RANTES. Post-translationally, O-glycosylated, but not N-glycosylated. Ser-6 appears to be the major site even if Ser-7 may be also O-glycosylated. Also sialylated glycans present which contribute to chemokine binding. Thr-16 and Ser-17 may also be glycosylated and, if so, with small moieties such as a T-antigen.

It is found in the cell membrane. Functionally, receptor for a number of inflammatory CC-chemokines including CCL3/MIP-1-alpha, CCL4/MIP-1-beta and RANTES and subsequently transduces a signal by increasing the intracellular calcium ion level. May play a role in the control of granulocytic lineage proliferation or differentiation. Participates in T-lymphocyte migration to the infection site by acting as a chemotactic receptor. In Erythrocebus patas (Red guenon), this protein is C-C chemokine receptor type 5 (CCR5).